A 280-amino-acid polypeptide reads, in one-letter code: Large ribosomal subunit protein uL2cz/uL2cy (280 aa).

Disordered stretches follow at residues Met1–Asn25 and Pro231–Lys280.

The protein belongs to the universal ribosomal protein uL2 family. Part of the 50S ribosomal subunit.

The protein localises to the plastid. The protein resides in the chloroplast. This is Large ribosomal subunit protein uL2cz/uL2cy (rpl2-A) from Platanus occidentalis (Sycamore).